A 347-amino-acid chain; its full sequence is Protein RecA (347 aa).

65 to 72 (GPESSGKT) lines the ATP pocket.

This sequence belongs to the RecA family.

It localises to the cytoplasm. Functionally, can catalyze the hydrolysis of ATP in the presence of single-stranded DNA, the ATP-dependent uptake of single-stranded DNA by duplex DNA, and the ATP-dependent hybridization of homologous single-stranded DNAs. It interacts with LexA causing its activation and leading to its autocatalytic cleavage. The protein is Protein RecA of Aliivibrio salmonicida (strain LFI1238) (Vibrio salmonicida (strain LFI1238)).